Reading from the N-terminus, the 369-residue chain is Flagellar P-ring protein (369 aa).

An N-terminal signal peptide occupies residues 1–22; it reads MFNARRLIAATLLMSCAFGAHA.

Belongs to the FlgI family. As to quaternary structure, the basal body constitutes a major portion of the flagellar organelle and consists of four rings (L,P,S, and M) mounted on a central rod.

It is found in the periplasm. The protein localises to the bacterial flagellum basal body. Functionally, assembles around the rod to form the L-ring and probably protects the motor/basal body from shearing forces during rotation. This chain is Flagellar P-ring protein, found in Pseudomonas entomophila (strain L48).